We begin with the raw amino-acid sequence, 252 residues long: Type III pantothenate kinase (252 aa).

Residue 6–13 (DIGNTNTV) participates in ATP binding. 105-108 (GADR) contacts substrate. The active-site Proton acceptor is Asp107. Asp127 provides a ligand contact to K(+). Thr130 is an ATP binding site. Thr182 is a substrate binding site.

Belongs to the type III pantothenate kinase family. In terms of assembly, homodimer. NH4(+) is required as a cofactor. K(+) serves as cofactor.

It localises to the cytoplasm. The catalysed reaction is (R)-pantothenate + ATP = (R)-4'-phosphopantothenate + ADP + H(+). It functions in the pathway cofactor biosynthesis; coenzyme A biosynthesis; CoA from (R)-pantothenate: step 1/5. In terms of biological role, catalyzes the phosphorylation of pantothenate (Pan), the first step in CoA biosynthesis. The protein is Type III pantothenate kinase of Salinispora arenicola (strain CNS-205).